The sequence spans 158 residues: Large ribosomal subunit protein mL50 (158 aa).

This sequence belongs to the mitochondrion-specific ribosomal protein mL50 family. Component of the mitochondrial large ribosomal subunit (mt-LSU). Mature mammalian 55S mitochondrial ribosomes consist of a small (28S) and a large (39S) subunit. The 28S small subunit contains a 12S ribosomal RNA (12S mt-rRNA) and 30 different proteins. The 39S large subunit contains a 16S rRNA (16S mt-rRNA), a copy of mitochondrial valine transfer RNA (mt-tRNA(Val)), which plays an integral structural role, and 52 different proteins.

It is found in the mitochondrion. This chain is Large ribosomal subunit protein mL50 (MRPL50), found in Homo sapiens (Human).